We begin with the raw amino-acid sequence, 311 residues long: DNA-directed RNA polymerase subunit alpha (311 aa).

The segment at 1–226 is alpha N-terminal domain (alpha-NTD); that stretch reads MIEFEKPNIT…EHLDLFTNLT (226 aa). The tract at residues 243-311 is alpha C-terminal domain (alpha-CTD); sequence DDRILDRTIE…IDLGLGLKDK (69 aa).

Belongs to the RNA polymerase alpha chain family. In terms of assembly, homodimer. The RNAP catalytic core consists of 2 alpha, 1 beta, 1 beta' and 1 omega subunit. When a sigma factor is associated with the core the holoenzyme is formed, which can initiate transcription.

The catalysed reaction is RNA(n) + a ribonucleoside 5'-triphosphate = RNA(n+1) + diphosphate. Its function is as follows. DNA-dependent RNA polymerase catalyzes the transcription of DNA into RNA using the four ribonucleoside triphosphates as substrates. This is DNA-directed RNA polymerase subunit alpha from Streptococcus pneumoniae serotype 4 (strain ATCC BAA-334 / TIGR4).